Here is a 220-residue protein sequence, read N- to C-terminus: Large ribosomal subunit protein bL9 (220 aa).

Residues 167-184 (AAAEVEQAEDVAAAEQQD) show a composition bias toward low complexity. A disordered region spans residues 167 to 220 (AAAEVEQAEDVAAAEQQDSSPVDDHADDADGATGGEGRDEGAGDASDGEEMPST).

This sequence belongs to the bacterial ribosomal protein bL9 family.

In terms of biological role, binds to the 23S rRNA. The sequence is that of Large ribosomal subunit protein bL9 from Anaplasma marginale (strain St. Maries).